Consider the following 168-residue polypeptide: uncharacterized protein (168 aa).

A disordered region spans residues 18–73 (RTTVKTKSHNPKTLYPNNKPRWESKLHAGPKGFQSSRTSEKPGRPDPDPEDDPPIP). Residues 55 to 64 (TSEKPGRPDP) are compositionally biased toward basic and acidic residues. 2 helical membrane-spanning segments follow: residues 84-104 (IVVS…VLEV) and 113-133 (VPLW…ALGI).

The protein resides in the membrane. This is an uncharacterized protein from Arabidopsis thaliana (Mouse-ear cress).